Here is a 550-residue protein sequence, read N- to C-terminus: Major fimbrium tip subunit FimE (550 aa).

A signal peptide spans 1–21 (MKSKSIIAQLLYVLIAFMAVS). A lipid anchor (N-palmitoyl cysteine) is attached at Cys22. Cys22 carries S-diacylglycerol cysteine lipidation. Positions 22 to 51 (CVADKSEPCPSGEPTRVSGSIVSLEHHGLR) are excised as a propeptide.

It belongs to the FimE family. Fimbriae are composed of a major, structural subunit and the minor components FimC, FimD and FimE. Identified in a complex composed of FimC, FimD and FimE (in vitro). Does not directly interact with host proteins, but only as a complex with FimC and FimD.

The protein resides in the fimbrium. It localises to the cell outer membrane. Functionally, probably a component of the fimbrium tip; required for incorporation of FimC and FimD into fimbriae. These long, filamentous pili are attached to the cell surface; they mediate biofilm formation, adhesion onto host cells and onto other bacteria that are part of the oral microbiome. They play an important role in invasion of periodontal tissues and are major virulence factors. FimC, FimD and FimE contribute to interaction with host CXCR4 and thereby down-regulate the TLR2-mediated host immune response. This Porphyromonas gingivalis (strain ATCC 33277 / DSM 20709 / CIP 103683 / JCM 12257 / NCTC 11834 / 2561) protein is Major fimbrium tip subunit FimE.